The chain runs to 292 residues: Nitrogenase iron protein (292 aa).

8 to 15 serves as a coordination point for ATP; sequence GKGGIGKS. A [4Fe-4S] cluster-binding site is contributed by Cys96. Arg99 bears the ADP-ribosylarginine; by dinitrogenase reductase ADP-ribosyltransferase mark. Cys130 serves as a coordination point for [4Fe-4S] cluster.

Belongs to the NifH/BchL/ChlL family. As to quaternary structure, homodimer. [4Fe-4S] cluster is required as a cofactor. The reversible ADP-ribosylation of Arg-99 inactivates the nitrogenase reductase and regulates nitrogenase activity.

The enzyme catalyses N2 + 8 reduced [2Fe-2S]-[ferredoxin] + 16 ATP + 16 H2O = H2 + 8 oxidized [2Fe-2S]-[ferredoxin] + 2 NH4(+) + 16 ADP + 16 phosphate + 6 H(+). Its function is as follows. The key enzymatic reactions in nitrogen fixation are catalyzed by the nitrogenase complex, which has 2 components: the iron protein and the molybdenum-iron protein. The chain is Nitrogenase iron protein from Synechococcus sp. (strain JA-3-3Ab) (Cyanobacteria bacterium Yellowstone A-Prime).